Reading from the N-terminus, the 117-residue chain is 16 kDa protein (117 aa).

This chain is 16 kDa protein, found in Tobacco rattle virus (strain PLB).